The following is a 219-amino-acid chain: Chloramphenicol acetyltransferase (219 aa).

Catalysis depends on H193, which acts as the Proton acceptor.

The protein belongs to the chloramphenicol acetyltransferase family. As to quaternary structure, homotrimer.

It carries out the reaction chloramphenicol + acetyl-CoA = chloramphenicol 3-acetate + CoA. Its function is as follows. This enzyme is an effector of chloramphenicol resistance in bacteria. The polypeptide is Chloramphenicol acetyltransferase (cat) (Klebsiella sp).